The following is a 698-amino-acid chain: Pentatricopeptide repeat-containing protein 1, mitochondrial (698 aa).

Residues 49 to 88 (SSSQLPLGQERQENTGSLGSDPSHSNSTATQEEDEEESFG) are disordered. Residues 62-78 (NTGSLGSDPSHSNSTAT) show a composition bias toward polar residues. PPR repeat units follow at residues 133–169 (TPYWYFLQCKRLIKEGKLVEALDLFERQMLKEERLQP), 170–204 (MESNYTALIGGCGRVGYLKKAFSLYNQMKKRDLEP), 205–243 (SDATYTALFNVCAESPWKDSALQSALKLRQQLQAKNFEL), 244–278 (NLKTYHALLKMAAKCADLRMCLDVFKEIIHKGHVV), 279–315 (TEETFSFLLMGCIQDKKTGFRYALQVWRLMLSLGLQP), and 316–352 (SRDSYNLLLVAARDCGLGDPQVASELLLKPREEATVL). The interval 392–419 (QALGPPEPPEARVPSKAQPEVDTKAEPS) is disordered. 3 PPR repeats span residues 517 to 551 (DLTFFNTLVRKKSKLGDLEGAKALLPVLAKRGLVP), 552 to 583 (NLQTFCNLAIGCHRPKDGLQLLTDMKKSQVTP), and 584 to 618 (NSHIYSALINAAVRKLNYTYLINILKDMKQNRVPV). Residues 670–698 (HPWQKFRTKPQEDQDTRKEADDGCALGGR) form a disordered region. A compositionally biased stretch (basic and acidic residues) spans 678–690 (KPQEDQDTRKEAD).

This sequence belongs to the PTCD1 family. Associates with mitochondrial leucine tRNAs. Interacts with ELAC2.

The protein localises to the mitochondrion. The protein resides in the mitochondrion matrix. In terms of biological role, mitochondrial protein implicated in negative regulation of leucine tRNA levels, as well as negative regulation of mitochondria-encoded proteins and COX activity. Also affects the 3'-processing of mitochondrial tRNAs. This Pongo abelii (Sumatran orangutan) protein is Pentatricopeptide repeat-containing protein 1, mitochondrial (PTCD1).